A 598-amino-acid chain; its full sequence is Mitochondrial distribution and morphology protein 30 (598 aa).

One can recognise an F-box domain in the interval 13 to 59 (SFTIDHLPPEIWLCISKLVGTSDLHNLCLINRRLYLTITSDEIWKRR).

As to quaternary structure, interacts with SKP1. Component of the probable SCF(MDM30) complex containing CDC53, SKP1, RBX1 and MDM30. Interacts with SKP1 and FZO1.

It localises to the cytoplasm. Its subcellular location is the mitochondrion. It participates in protein modification; protein ubiquitination. Its function is as follows. Substrate recognition component of a SCF (SKP1-CUL1-F-box protein) E3 ubiquitin-protein ligase complex which mediates the ubiquitination and subsequent proteasomal degradation of target proteins. Probably recognizes and binds to phosphorylated target proteins. Recognizes FZO1 and regulates the amount of FZO1. Regulatory factor for the mitochondrial fusion machinery. Required for mitochondrial DNA maintenance. The protein is Mitochondrial distribution and morphology protein 30 (MDM30) of Saccharomyces cerevisiae (strain ATCC 204508 / S288c) (Baker's yeast).